The following is a 475-amino-acid chain: NADH-quinone oxidoreductase subunit N (475 aa).

14 helical membrane-spanning segments follow: residues 5-25 (LALP…FGVV), 32-52 (FLSC…LVVM), 71-91 (FMKI…VGYA), 99-119 (FEFP…ASSE), 121-141 (LMTL…LCAF), 155-175 (YFVL…LVYG), 193-213 (STAV…GLTF), 232-252 (PTSV…ALLL), 266-286 (WQIL…LAAI), 294-314 (LMAY…CAGT), 322-342 (LVYL…IIAM), 366-386 (ATAM…AGFF), 389-409 (MMVF…IGVV), and 439-459 (LSLS…LLVL).

This sequence belongs to the complex I subunit 2 family. NDH-1 is composed of 14 different subunits. Subunits NuoA, H, J, K, L, M, N constitute the membrane sector of the complex.

It is found in the cell inner membrane. It catalyses the reaction a quinone + NADH + 5 H(+)(in) = a quinol + NAD(+) + 4 H(+)(out). Its function is as follows. NDH-1 shuttles electrons from NADH, via FMN and iron-sulfur (Fe-S) centers, to quinones in the respiratory chain. The immediate electron acceptor for the enzyme in this species is believed to be ubiquinone. Couples the redox reaction to proton translocation (for every two electrons transferred, four hydrogen ions are translocated across the cytoplasmic membrane), and thus conserves the redox energy in a proton gradient. This Gluconacetobacter diazotrophicus (strain ATCC 49037 / DSM 5601 / CCUG 37298 / CIP 103539 / LMG 7603 / PAl5) protein is NADH-quinone oxidoreductase subunit N.